The following is a 211-amino-acid chain: Molybdenum cofactor guanylyltransferase (211 aa).

GTP-binding positions include 12–14, Lys25, Asn53, Asp71, and Asp101; that span reads LAG. Asp101 contributes to the Mg(2+) binding site.

The protein belongs to the MobA family. In terms of assembly, monomer. Requires Mg(2+) as cofactor.

It is found in the cytoplasm. The enzyme catalyses Mo-molybdopterin + GTP + H(+) = Mo-molybdopterin guanine dinucleotide + diphosphate. In terms of biological role, transfers a GMP moiety from GTP to Mo-molybdopterin (Mo-MPT) cofactor (Moco or molybdenum cofactor) to form Mo-molybdopterin guanine dinucleotide (Mo-MGD) cofactor. The sequence is that of Molybdenum cofactor guanylyltransferase from Acidovorax sp. (strain JS42).